The sequence spans 487 residues: NADH-quinone oxidoreductase subunit N (487 aa).

The next 14 helical transmembrane spans lie at 8 to 28 (LIAMLPLLIVGLTVVVVMLSI), 35 to 55 (FINATLTVIGLNLALLSLYFV), 78 to 98 (GLVIIASLATSTFAYPWLVGY), 104 to 124 (EFYLLVLIAALGGILLASANH), 125 to 145 (LASLFLGIELLTLPLFGLIGY), 159 to 179 (YMLLSAAASSFLLFGMALLYA), 203 to 223 (ILAGLGMMIVGLGFKLSLVPF), 235 to 255 (PAPVSTFLATASKIAIFAVVM), 271 to 291 (LVLSIIAVASILFGNLMAISQ), 297 to 317 (LLGYSSIAHLGYLLIALVAVQ), 328 to 348 (IGVYLAGYLFSSLGAFGVVSL), 376 to 396 (AVMTVMMLSLAGIPMTLGFIG), 409 to 428 (LWWLTGAVVLGSAIGLYYYL), and 451 to 471 (ALTAGGVVVLISAILVLVLGI).

The protein belongs to the complex I subunit 2 family. NDH-1 is composed of 13 different subunits. Subunits NuoA, H, J, K, L, M, N constitute the membrane sector of the complex.

Its subcellular location is the cell inner membrane. It catalyses the reaction a quinone + NADH + 5 H(+)(in) = a quinol + NAD(+) + 4 H(+)(out). In terms of biological role, NDH-1 shuttles electrons from NADH, via FMN and iron-sulfur (Fe-S) centers, to quinones in the respiratory chain. The immediate electron acceptor for the enzyme in this species is believed to be ubiquinone. Couples the redox reaction to proton translocation (for every two electrons transferred, four hydrogen ions are translocated across the cytoplasmic membrane), and thus conserves the redox energy in a proton gradient. The chain is NADH-quinone oxidoreductase subunit N from Yersinia pseudotuberculosis serotype O:1b (strain IP 31758).